Consider the following 484-residue polypeptide: Glycogen synthase (484 aa).

Lysine 15 is an ADP-alpha-D-glucose binding site.

This sequence belongs to the glycosyltransferase 1 family. Bacterial/plant glycogen synthase subfamily.

The enzyme catalyses [(1-&gt;4)-alpha-D-glucosyl](n) + ADP-alpha-D-glucose = [(1-&gt;4)-alpha-D-glucosyl](n+1) + ADP + H(+). Its pathway is glycan biosynthesis; glycogen biosynthesis. Its function is as follows. Synthesizes alpha-1,4-glucan chains using ADP-glucose. In Geotalea daltonii (strain DSM 22248 / JCM 15807 / FRC-32) (Geobacter daltonii), this protein is Glycogen synthase.